A 151-amino-acid polypeptide reads, in one-letter code: Ribosomal RNA large subunit methyltransferase H (151 aa).

S-adenosyl-L-methionine-binding positions include Leu70, Gly99, and 118–123 (LSKLTF).

It belongs to the RNA methyltransferase RlmH family. In terms of assembly, homodimer.

It localises to the cytoplasm. It catalyses the reaction pseudouridine(1915) in 23S rRNA + S-adenosyl-L-methionine = N(3)-methylpseudouridine(1915) in 23S rRNA + S-adenosyl-L-homocysteine + H(+). Its function is as follows. Specifically methylates the pseudouridine at position 1915 (m3Psi1915) in 23S rRNA. This chain is Ribosomal RNA large subunit methyltransferase H, found in Gloeobacter violaceus (strain ATCC 29082 / PCC 7421).